The following is a 584-amino-acid chain: MKRHVASLLAQALKAMREAGELPADLELPEVQVERARDRAHGDYAANTAMVLAKPARQKPRDLAETIRSRLPASEAIAGVEIAGPGFLNFTLTTAARQESVRVALRQGAEYGRSDVGAGHRVHIEFVSANPTGPLHVGHGRGAAFGDALASVLEAAGYHVHREYYVNDAGRQMDILAASLWLRYLEAAGEPVSFPNKGYQGDYIVTHARELFEADGREHVRTAAELGAGLPAEDDDPEGYLDALVARSRELLGETAYRRVLDFALEAILGDIRADLDAFGVHYHRYFSERQLVDQGRIEHALERLDQAGYTYRADGALWFQASVFGDDKDRVLRRDNGLTTYFAADVAYHLDKIERGFDTLVNVWGADHHGYVPRVQAALKALGVDAERLDVRLVQFAILYRGGEKLPMSTRSGEFVTLRELRDEVGKDAARFFYVMRRSEQHMDFDLDLAKSESADNPVYYCQYAHARICSVFRQLEERGLACRVTPDEAALERLDAEHEAILLDLLGRYPEVIESAALAREPHQVAQYLRELAAAFHTYYNAVPFIIDDEALRDARLTLVQATRQVLANGLGLLGVDAPQSM.

The 'HIGH' region signature appears at 129 to 139 (ANPTGPLHVGH).

The protein belongs to the class-I aminoacyl-tRNA synthetase family. As to quaternary structure, monomer.

It is found in the cytoplasm. The enzyme catalyses tRNA(Arg) + L-arginine + ATP = L-arginyl-tRNA(Arg) + AMP + diphosphate. This chain is Arginine--tRNA ligase, found in Halorhodospira halophila (strain DSM 244 / SL1) (Ectothiorhodospira halophila (strain DSM 244 / SL1)).